The primary structure comprises 271 residues: Formamidopyrimidine-DNA glycosylase (271 aa).

Catalysis depends on proline 2, which acts as the Schiff-base intermediate with DNA. Glutamate 3 acts as the Proton donor in catalysis. Catalysis depends on lysine 58, which acts as the Proton donor; for beta-elimination activity. Positions 92, 111, and 152 each coordinate DNA. An FPG-type zinc finger spans residues 237-271; it reads FVYGREGEACKQCGRVLKHATIGQRATVWCGSCQR. Residue arginine 261 is the Proton donor; for delta-elimination activity of the active site.

It belongs to the FPG family. As to quaternary structure, monomer. It depends on Zn(2+) as a cofactor.

The enzyme catalyses Hydrolysis of DNA containing ring-opened 7-methylguanine residues, releasing 2,6-diamino-4-hydroxy-5-(N-methyl)formamidopyrimidine.. It catalyses the reaction 2'-deoxyribonucleotide-(2'-deoxyribose 5'-phosphate)-2'-deoxyribonucleotide-DNA = a 3'-end 2'-deoxyribonucleotide-(2,3-dehydro-2,3-deoxyribose 5'-phosphate)-DNA + a 5'-end 5'-phospho-2'-deoxyribonucleoside-DNA + H(+). In terms of biological role, involved in base excision repair of DNA damaged by oxidation or by mutagenic agents. Acts as a DNA glycosylase that recognizes and removes damaged bases. Has a preference for oxidized purines, such as 7,8-dihydro-8-oxoguanine (8-oxoG). Has AP (apurinic/apyrimidinic) lyase activity and introduces nicks in the DNA strand. Cleaves the DNA backbone by beta-delta elimination to generate a single-strand break at the site of the removed base with both 3'- and 5'-phosphates. The protein is Formamidopyrimidine-DNA glycosylase of Xanthomonas axonopodis pv. citri (strain 306).